Reading from the N-terminus, the 328-residue chain is Serine protease 27 (328 aa).

An N-terminal signal peptide occupies residues 1 to 22; sequence MRQPHIAALLLLPLLLRSGTEG. Residues 23–37 constitute a propeptide, activation peptide; the sequence is ARTLRACGHPKMFNR. The 243-residue stretch at 38–280 folds into the Peptidase S1 domain; that stretch reads MVGGENALEG…HHKWIHQIIP (243 aa). Cysteines 63 and 79 form a disulfide. H78 acts as the Charge relay system in catalysis. N-linked (GlcNAc...) asparagine glycosylation occurs at N82. D127 functions as the Charge relay system in the catalytic mechanism. Intrachain disulfides connect C161–C238, C194–C217, and C228–C256. Catalysis depends on S232, which acts as the Charge relay system.

This sequence belongs to the peptidase S1 family.

It localises to the secreted. In Mus musculus (Mouse), this protein is Serine protease 27 (Prss27).